We begin with the raw amino-acid sequence, 377 residues long: Sodium-dependent organic anion transporter (377 aa).

At 1–29 the chain is on the extracellular side; it reads MRANCSSGLACPANSSEEELPEGLKAFGN. Asn-4 is a glycosylation site (N-linked (GlcNAc...) asparagine). The chain crosses the membrane as a helical span at residues 30 to 50; that stretch reads LDLVFTVVSALMIGLLMFSLG. Over 51 to 67 the chain is Cytoplasmic; sequence CSVEVQKLWGHIRRPWG. The helical transmembrane segment at 68–88 threads the bilayer; the sequence is IAVGMLCQFGLMPLIAYLLII. At 89–97 the chain is on the extracellular side; the sequence is SFSLKPLQA. A helical transmembrane segment spans residues 98 to 118; it reads IAVLIMGCCPGGTVSNIFTFW. The Cytoplasmic segment spans residues 119-133; the sequence is VDGDMDLSISMTTCS. A helical transmembrane segment spans residues 134–154; the sequence is TMAALGMMPLCLYLYTLSWNL. The Extracellular portion of the chain corresponds to 155-159; it reads EQNLT. An N-linked (GlcNAc...) asparagine glycan is attached at Asn-157. The helical transmembrane segment at 160 to 180 threads the bilayer; it reads IPYQNIGITLVCLIIPVAFGI. Residues 181–195 are Cytoplasmic-facing; the sequence is YVNYRWPKQSKIILK. A helical transmembrane segment spans residues 196 to 216; sequence IGAIAGGLLFLVVTGAGMVLM. At 217–223 the chain is on the extracellular side; the sequence is KEFWSSD. The chain crosses the membrane as a helical span at residues 224-244; that stretch reads IILLMISFIFPLIGHATGFLL. Topologically, residues 245–257 are cytoplasmic; it reads ALLTHQSWQRCRT. A helical transmembrane segment spans residues 258–278; sequence ISLETGTQNVQMCFTMLQLSF. Over 279 to 285 the chain is Extracellular; it reads TAEQLVQ. The helical transmembrane segment at 286–306 threads the bilayer; sequence IFGFVLAYGLFQMLNGFFMVA. Over 307–377 the chain is Cytoplasmic; that stretch reads AYKMYKRRLK…TPTGDIARAK (71 aa). Positions 319-377 are disordered; the sequence is HGNEKPSCQEARHRKKSTSPKETTAFLEVNEEATLSPGPSGPVDPHGAPTPTGDIARAK.

It belongs to the bile acid:sodium symporter (BASS) (TC 2.A.28) family. Glycosylated.

Its subcellular location is the membrane. It catalyses the reaction estrone 3-sulfate(out) + 2 Na(+)(out) = estrone 3-sulfate(in) + 2 Na(+)(in). The catalysed reaction is 17beta-estradiol 3-sulfate(out) + 2 Na(+)(out) = 17beta-estradiol 3-sulfate(in) + 2 Na(+)(in). The enzyme catalyses dehydroepiandrosterone 3-sulfate(out) + 2 Na(+)(out) = dehydroepiandrosterone 3-sulfate(in) + 2 Na(+)(in). It carries out the reaction androst-5-ene-diol 3-sulfate(out) + 2 Na(+)(out) = androst-5-ene-diol 3-sulfate(in) + 2 Na(+)(in). It catalyses the reaction pregnenolone sulfate(out) + 2 Na(+)(out) = pregnenolone sulfate(in) + 2 Na(+)(in). The catalysed reaction is taurolithocholate 3-sulfate(out) + 2 Na(+)(out) = taurolithocholate 3-sulfate(in) + 2 Na(+)(in). The enzyme catalyses androsterone 3alpha-sulfate(out) + 2 Na(+)(out) = androsterone 3alpha-sulfate(in) + 2 Na(+)(in). It carries out the reaction 5alpha-dihydrotestosterone sulfate(out) + 2 Na(+)(out) = 5alpha-dihydrotestosterone sulfate(in) + 2 Na(+)(in). It catalyses the reaction 17beta-estradiol 17-sulfate(out) + 2 Na(+)(out) = 17beta-estradiol 17-sulfate(in) + 2 Na(+)(in). The catalysed reaction is 17alpha-hydroxypregnenolone 3-sulfate(out) + 2 Na(+)(out) = 17alpha-hydroxypregnenolone 3-sulfate(in) + 2 Na(+)(in). The enzyme catalyses epiandrosterone 3-sulfate(out) + 2 Na(+)(out) = epiandrosterone 3-sulfate(in) + 2 Na(+)(in). It carries out the reaction epitestosterone 17-sulfate(out) + 2 Na(+)(out) = epitestosterone 17-sulfate(in) + 2 Na(+)(in). It catalyses the reaction testosterone 17-sulfate(out) + 2 Na(+)(out) = testosterone 17-sulfate(in) + 2 Na(+)(in). The catalysed reaction is 16alpha-hydroxydehydroepiandrosterone 3-sulfate(out) + 2 Na(+)(out) = 16alpha-hydroxydehydroepiandrosterone 3-sulfate(in) + 2 Na(+)(in). In terms of biological role, transports sulfoconjugated steroid hormones from the extracellular compartment into the cytosol in a sodium-dependent manner without hydrolysis. Steroid sulfate hormones are commonly considered to be biologically inactive metabolites, that may be activated by steroid sulfatases into free steroids. May play an important role by delivering sulfoconjugated steroids to specific target cells in reproductive organs. May play a role transporting the estriol precursor 16alpha-hydroxydehydroepiandrosterone 3-sulfate (16a-OH-DHEAS) at the fetal blood vessel endothelium. Can also transport other sulfoconjugated molecules such as taurolithocholic acid-3-sulfate and sulfoconjugated pyrenes. The chain is Sodium-dependent organic anion transporter (SLC10A6) from Bos taurus (Bovine).